We begin with the raw amino-acid sequence, 440 residues long: Thymidine phosphorylase (440 aa).

The protein belongs to the thymidine/pyrimidine-nucleoside phosphorylase family. As to quaternary structure, homodimer.

It carries out the reaction thymidine + phosphate = 2-deoxy-alpha-D-ribose 1-phosphate + thymine. Its pathway is pyrimidine metabolism; dTMP biosynthesis via salvage pathway; dTMP from thymine: step 1/2. Its function is as follows. The enzymes which catalyze the reversible phosphorolysis of pyrimidine nucleosides are involved in the degradation of these compounds and in their utilization as carbon and energy sources, or in the rescue of pyrimidine bases for nucleotide synthesis. The protein is Thymidine phosphorylase of Escherichia coli O127:H6 (strain E2348/69 / EPEC).